A 519-amino-acid polypeptide reads, in one-letter code: tRNA pseudouridine synthase Pus10 (519 aa).

The tract at residues 70–98 (NENEEIDENTKNNEDTENKADDKSQSNEE) is disordered. Residues 77–98 (ENTKNNEDTENKADDKSQSNEE) show a composition bias toward basic and acidic residues. The THUMP domain occupies 144 to 265 (NESEENESNI…NQKIYLQINP (122 aa)). Asp334 functions as the Nucleophile in the catalytic mechanism. Tyr398 and Tyr476 together coordinate substrate.

It belongs to the pseudouridine synthase Pus10 family.

It catalyses the reaction uridine(54) in tRNA = pseudouridine(54) in tRNA. The catalysed reaction is uridine(55) in tRNA = pseudouridine(55) in tRNA. In terms of biological role, responsible for synthesis of pseudouridine from uracil-54 and uracil-55 in the psi GC loop of transfer RNAs. The polypeptide is tRNA pseudouridine synthase Pus10 (Methanococcus voltae (strain ATCC BAA-1334 / A3)).